The primary structure comprises 297 residues: Glucuronoxylan 4-O-methyltransferase 3 (297 aa).

A helical transmembrane segment spans residues 9 to 29; the sequence is LNLKVIFIGSSILILIIIYLA. A compositionally biased stretch (low complexity) spans 35–47; sequence SSSSKPISKTNLS. Residues 35–63 are disordered; that stretch reads SSSSKPISKTNLSQEEEETQHKQEGCPTT.

Belongs to the methyltransferase superfamily. Expressed in hypocotyls, roots, rosette leaves, stems and siliques.

Its subcellular location is the golgi apparatus membrane. The enzyme catalyses glucuronoxylan D-glucuronate + n S-adenosyl-L-methionine = glucuronoxylan 4-O-methyl-D-glucuronate + n S-adenosyl-L-homocysteine + n H(+). Functionally, methyltransferase catalyzing 4-O-methylation of glucuronic acid side chains on xylan. In Arabidopsis thaliana (Mouse-ear cress), this protein is Glucuronoxylan 4-O-methyltransferase 3 (GXM3).